The primary structure comprises 205 residues: LexA repressor (205 aa).

The H-T-H motif DNA-binding region spans 28–48 (RAEIATRLGFKSANAAEEHLK). Catalysis depends on for autocatalytic cleavage activity residues Ser122 and Lys159.

The protein belongs to the peptidase S24 family. Homodimer.

It carries out the reaction Hydrolysis of Ala-|-Gly bond in repressor LexA.. Functionally, represses a number of genes involved in the response to DNA damage (SOS response), including recA and lexA. In the presence of single-stranded DNA, RecA interacts with LexA causing an autocatalytic cleavage which disrupts the DNA-binding part of LexA, leading to derepression of the SOS regulon and eventually DNA repair. This is LexA repressor from Shewanella denitrificans (strain OS217 / ATCC BAA-1090 / DSM 15013).